The following is a 419-amino-acid chain: Creatine kinase S-type, mitochondrial (419 aa).

Residues 1–39 constitute a mitochondrion transit peptide; the sequence is MAGTFGRLLAGRVTAALFAAAGSGVLTTGYLLNQQNVKA. Residues 46 to 132 enclose the Phosphagen kinase N-terminal domain; the sequence is KLFPPSADYP…FDPVIKARHN (87 aa). One can recognise a Phosphagen kinase C-terminal domain in the interval 159-401; the sequence is YVLSSRVRTG…NYLVDCEKKL (243 aa). ATP is bound by residues 162–166, His-225, Arg-270, Arg-326, 354–359, and Asp-369; these read SSRVR and RGTGGV.

It belongs to the ATP:guanido phosphotransferase family. In terms of assembly, exists as an octamer composed of four MTCK homodimers. Expressed in the leg muscle and heart.

Its subcellular location is the mitochondrion inner membrane. It catalyses the reaction creatine + ATP = N-phosphocreatine + ADP + H(+). Its function is as follows. Reversibly catalyzes the transfer of phosphate between ATP and various phosphogens (e.g. creatine phosphate). Creatine kinase isoenzymes play a central role in energy transduction in tissues with large, fluctuating energy demands, such as skeletal muscle, heart, brain and spermatozoa. This chain is Creatine kinase S-type, mitochondrial (CKMT2), found in Gallus gallus (Chicken).